Reading from the N-terminus, the 150-residue chain is Arginine repressor (150 aa).

It belongs to the ArgR family.

The protein resides in the cytoplasm. It functions in the pathway amino-acid biosynthesis; L-arginine biosynthesis [regulation]. In terms of biological role, regulates arginine biosynthesis genes. The protein is Arginine repressor of Clostridium botulinum (strain Okra / Type B1).